A 578-amino-acid chain; its full sequence is Hyaluronan synthase 1 (578 aa).

Over 1-25 the chain is Cytoplasmic; the sequence is MRQQDAPKPTPAACRCSGLARRVLT. The chain crosses the membrane as a helical span at residues 26-46; the sequence is IAFALLILGLMTWAYAAGVPL. The Extracellular segment spans residues 47–52; the sequence is ASDRYG. The helical transmembrane segment at 53–73 threads the bilayer; the sequence is LLAFGLYGAFLSAHLVAQSLF. Over 74–399 the chain is Cytoplasmic; it reads AYLEHRRVAA…NALWWHRHHA (326 aa). The chain crosses the membrane as a helical span at residues 400–420; that stretch reads WMTYEAVVSGLFPFFVAATVL. Residues 421-430 lie on the Extracellular side of the membrane; sequence RLFYAGRPWA. A helical membrane pass occupies residues 431–451; the sequence is LLWVLLCVQGVALAKAAFAAW. Residues 452 to 457 are Cytoplasmic-facing; that stretch reads LRGCLR. A helical transmembrane segment spans residues 458–478; that stretch reads MVLLSLYAPLYMCGLLPAKFL. The Extracellular portion of the chain corresponds to 479–497; the sequence is ALVTMNQSGWGTSGRRKLA. Residues 498-518 form a helical membrane-spanning segment; the sequence is ANYVPLLPLALWALLLLGGLV. Over 519–540 the chain is Cytoplasmic; that stretch reads RSVAHEARADWSGPSRAAEAYH. Residues 541–561 traverse the membrane as a helical segment; the sequence is LAAGAGAYVGYWVAMLTLYWV. Residues 562 to 578 lie on the Extracellular side of the membrane; that stretch reads GVRRLCRRRTGGYRVQV.

It belongs to the NodC/HAS family. Mg(2+) serves as cofactor. Widely expressed. Highly expressed in ovary followed by spleen, thymus, prostate, testes and large intestine. Weakly expressed in small intestine.

It localises to the membrane. It carries out the reaction [hyaluronan](n) + UDP-N-acetyl-alpha-D-glucosamine = N-acetyl-beta-D-glucosaminyl-(1-&gt;4)-[hyaluronan](n) + UDP + H(+). It catalyses the reaction N-acetyl-beta-D-glucosaminyl-(1-&gt;4)-[hyaluronan](n) + UDP-alpha-D-glucuronate = [hyaluronan](n+1) + UDP + H(+). Its pathway is glycan biosynthesis; hyaluronan biosynthesis. In terms of biological role, catalyzes the addition of GlcNAc or GlcUA monosaccharides to the nascent hyaluronan polymer. Therefore, it is essential to hyaluronan synthesis a major component of most extracellular matrices that has a structural role in tissues architectures and regulates cell adhesion, migration and differentiation. This is one of the isozymes catalyzing that reaction. Also able to catalyze the synthesis of chito-oligosaccharide depending on the substrate. This chain is Hyaluronan synthase 1 (HAS1), found in Homo sapiens (Human).